A 283-amino-acid chain; its full sequence is Shikimate dehydrogenase (NADP(+)) (283 aa).

Shikimate is bound by residues 18–20 and Thr66; that span reads SYS. The active-site Proton acceptor is Lys70. Positions 91 and 106 each coordinate shikimate. NADP(+)-binding positions include 130 to 134 and Met225; that span reads GAGGA. Residue Tyr227 coordinates shikimate. Gly248 contributes to the NADP(+) binding site.

It belongs to the shikimate dehydrogenase family. As to quaternary structure, homodimer.

It carries out the reaction shikimate + NADP(+) = 3-dehydroshikimate + NADPH + H(+). It participates in metabolic intermediate biosynthesis; chorismate biosynthesis; chorismate from D-erythrose 4-phosphate and phosphoenolpyruvate: step 4/7. In terms of biological role, involved in the biosynthesis of the chorismate, which leads to the biosynthesis of aromatic amino acids. Catalyzes the reversible NADPH linked reduction of 3-dehydroshikimate (DHSA) to yield shikimate (SA). This is Shikimate dehydrogenase (NADP(+)) from Pelodictyon phaeoclathratiforme (strain DSM 5477 / BU-1).